We begin with the raw amino-acid sequence, 491 residues long: Feruloyl-CoA synthase (491 aa).

T154 is a binding site for Mg(2+). ATP contacts are provided by A199, G291, and T295. A Mg(2+)-binding site is contributed by E296. ATP contacts are provided by D374 and K391.

It belongs to the ATP-dependent AMP-binding enzyme family. Mg(2+) serves as cofactor.

The catalysed reaction is (E)-ferulate + ATP + CoA = (E)-feruloyl-CoA + AMP + diphosphate. In terms of biological role, catalyzes the formation of (E)-feruloyl-CoA, AMP and diphosphate from (E)-ferulate, CoA and ATP. Involved in the degradation pathway of lignin-derived aromatic compounds of plant cell walls. Catalyzes the first enzymatic step in the conversion of ferulic acid into high value compound vanillin. This Amycolatopsis sp protein is Feruloyl-CoA synthase.